The following is a 269-amino-acid chain: Phosphate import ATP-binding protein PstB 1 (269 aa).

Residues 23–264 (LSTEDLNVYY…PKIKAAEDYV (242 aa)) form the ABC transporter domain. 55–62 (GASGSGKS) is an ATP binding site.

It belongs to the ABC transporter superfamily. Phosphate importer (TC 3.A.1.7) family. In terms of assembly, the complex is composed of two ATP-binding proteins (PstB), two transmembrane proteins (PstC and PstA) and a solute-binding protein (PstS).

It localises to the cell membrane. It carries out the reaction phosphate(out) + ATP + H2O = ADP + 2 phosphate(in) + H(+). In terms of biological role, part of the ABC transporter complex PstSACB involved in phosphate import. Responsible for energy coupling to the transport system. In Latilactobacillus sakei subsp. sakei (strain 23K) (Lactobacillus sakei subsp. sakei), this protein is Phosphate import ATP-binding protein PstB 1.